The chain runs to 400 residues: Dual specificity mitogen-activated protein kinase kinase 2 (400 aa).

M1 bears the N-acetylmethionine mark. S23 bears the Phosphoserine mark. Positions F72 to I369 constitute a Protein kinase domain. Residues L78–V86 and K101 contribute to the ATP site. Residue D194 is the Proton acceptor of the active site. 2 positions are modified to phosphoserine; by RAF: S222 and S226. Positions P282–M310 are disordered. Residues S293, S295, and S306 each carry the phosphoserine modification. Phosphothreonine occurs at positions 394 and 396.

Belongs to the protein kinase superfamily. STE Ser/Thr protein kinase family. MAP kinase kinase subfamily. Interacts with MORG1. Interacts with SGK1. Interacts with KSR1. Interacts with KSR1 and BRAF; the interaction with KSR1 mediates KSR1-BRAF dimerization. Interacts with GLS. Requires Mg(2+) as cofactor. In terms of processing, MAPKK is itself dependent on Ser/Thr phosphorylation for activity catalyzed by MAP kinase kinase kinases (RAF or MEKK1). Phosphorylated by MAP2K1/MEK1. In terms of tissue distribution, expressed abundantly in the adult brain and muscle.

The protein localises to the cytoplasm. Its subcellular location is the membrane. It catalyses the reaction L-seryl-[protein] + ATP = O-phospho-L-seryl-[protein] + ADP + H(+). The catalysed reaction is L-threonyl-[protein] + ATP = O-phospho-L-threonyl-[protein] + ADP + H(+). The enzyme catalyses L-tyrosyl-[protein] + ATP = O-phospho-L-tyrosyl-[protein] + ADP + H(+). Functionally, catalyzes the concomitant phosphorylation of a threonine and a tyrosine residue in a Thr-Glu-Tyr sequence located in MAP kinases. Activates the ERK1 and ERK2 MAP kinases. Activates BRAF in a KSR1 or KSR2-dependent manner; by binding to KSR1 or KSR2 releases the inhibitory intramolecular interaction between KSR1 or KSR2 protein kinase and N-terminal domains which promotes KSR1 or KSR2-BRAF dimerization and BRAF activation. The sequence is that of Dual specificity mitogen-activated protein kinase kinase 2 (Map2k2) from Rattus norvegicus (Rat).